We begin with the raw amino-acid sequence, 136 residues long: Putative pre-16S rRNA nuclease (136 aa).

The protein belongs to the YqgF nuclease family.

It localises to the cytoplasm. Functionally, could be a nuclease involved in processing of the 5'-end of pre-16S rRNA. This Francisella philomiragia subsp. philomiragia (strain ATCC 25017 / CCUG 19701 / FSC 153 / O#319-036) protein is Putative pre-16S rRNA nuclease.